The sequence spans 361 residues: sn-glycerol-3-phosphate import ATP-binding protein UgpC (361 aa).

Residues 4–235 (LSLKGVRKSY…PATVFVAGFI (232 aa)) enclose the ABC transporter domain. 37 to 44 (GPSGCGKS) is an ATP binding site.

This sequence belongs to the ABC transporter superfamily. sn-glycerol-3-phosphate importer (TC 3.A.1.1.3) family. As to quaternary structure, the complex is composed of two ATP-binding proteins (UgpC), two transmembrane proteins (UgpA and UgpE) and a solute-binding protein (UgpB).

It is found in the cell inner membrane. The catalysed reaction is sn-glycerol 3-phosphate(out) + ATP + H2O = sn-glycerol 3-phosphate(in) + ADP + phosphate + H(+). Part of the ABC transporter complex UgpBAEC involved in sn-glycerol-3-phosphate (G3P) import. Responsible for energy coupling to the transport system. In Burkholderia lata (strain ATCC 17760 / DSM 23089 / LMG 22485 / NCIMB 9086 / R18194 / 383), this protein is sn-glycerol-3-phosphate import ATP-binding protein UgpC.